Reading from the N-terminus, the 226-residue chain is Gap junction beta-2 protein (226 aa).

Residues 1 to 20 are Cytoplasmic-facing; it reads MDWGGLHTILGGVNKHSTSI. Residues 21-40 form a helical membrane-spanning segment; it reads GKIWLTVLFIFRIMILVVAA. Residues 41 to 75 are Extracellular-facing; that stretch reads KEVWGDEQADFVCNTLQPGCKNVCYDHYFPISHIR. 3 cysteine pairs are disulfide-bonded: Cys-53-Cys-180, Cys-60-Cys-174, and Cys-64-Cys-169. A helical membrane pass occupies residues 76–98; the sequence is LWALQLIFVSTPALLVAMHVAYY. At 99 to 131 the chain is on the cytoplasmic side; it reads RHEKKRKFIRGEIKTEFKDIEEIKKQKVRIEGS. Residues 132 to 154 traverse the membrane as a helical segment; the sequence is LWWTYTGSIFFRVIFEAAFMYVF. The Extracellular portion of the chain corresponds to 155-192; sequence YVMYDGFAMQRLVKCNAWPCPNTVDCFVSRPTEKTVFT. Residues 193–215 form a helical membrane-spanning segment; sequence VFMIAVSGICILLNVTELCYLLI. Over 216–226 the chain is Cytoplasmic; sequence RFCSGKSKKPV.

It belongs to the connexin family. A connexon is composed of a hexamer of connexins. Interacts with CNST.

Its subcellular location is the cell membrane. The protein resides in the cell junction. The protein localises to the gap junction. Functionally, one gap junction consists of a cluster of closely packed pairs of transmembrane channels, the connexons, through which materials of low MW diffuse from one cell to a neighboring cell. This Bos taurus (Bovine) protein is Gap junction beta-2 protein (GJB2).